The primary structure comprises 457 residues: 3-ketoacyl-CoA thiolase 5, peroxisomal (457 aa).

A peroxisome-targeting transit peptide spans 1 to 37 (MERAMERQKILLRHLNPVSSSNSSLKHEPSLLSPVNC). Cys137 acts as the Acyl-thioester intermediate in catalysis. Residues His394 and Cys426 each act as proton acceptor in the active site.

Belongs to the thiolase-like superfamily. Thiolase family. As to quaternary structure, homodimer. In terms of tissue distribution, expressed in seedlings and wounded leaves.

Its subcellular location is the peroxisome. It carries out the reaction an acyl-CoA + acetyl-CoA = a 3-oxoacyl-CoA + CoA. Its pathway is lipid metabolism; fatty acid metabolism. Its function is as follows. Probably involved in long chain fatty-acid beta-oxidation prior to gluconeogenesis during germination and subsequent seedling growth. Involved in systemic jasmonic acid (JA) biosynthesis after wounding and may be during senescence. In Arabidopsis thaliana (Mouse-ear cress), this protein is 3-ketoacyl-CoA thiolase 5, peroxisomal (KAT5).